We begin with the raw amino-acid sequence, 163 residues long: Ribonuclease P protein component (163 aa).

A disordered region spans residues 1–68; sequence MDEKDVATQP…GGKLLSLKGD (68 aa). Residues 8-19 are compositionally biased toward polar residues; the sequence is TQPQETGQNPRL.

It belongs to the RnpA family. As to quaternary structure, consists of a catalytic RNA component (M1 or rnpB) and a protein subunit.

The enzyme catalyses Endonucleolytic cleavage of RNA, removing 5'-extranucleotides from tRNA precursor.. In terms of biological role, RNaseP catalyzes the removal of the 5'-leader sequence from pre-tRNA to produce the mature 5'-terminus. It can also cleave other RNA substrates such as 4.5S RNA. The protein component plays an auxiliary but essential role in vivo by binding to the 5'-leader sequence and broadening the substrate specificity of the ribozyme. The chain is Ribonuclease P protein component from Thermus thermophilus (strain ATCC BAA-163 / DSM 7039 / HB27).